A 74-amino-acid polypeptide reads, in one-letter code: Acyl carrier protein (74 aa).

Positions 1 to 74 constitute a Carrier domain; it reads MFEKVRKIIA…DVVEYIKNNS (74 aa). The residue at position 34 (Ser34) is an O-(pantetheine 4'-phosphoryl)serine.

It belongs to the acyl carrier protein (ACP) family. 4'-phosphopantetheine is transferred from CoA to a specific serine of apo-ACP by AcpS. This modification is essential for activity because fatty acids are bound in thioester linkage to the sulfhydryl of the prosthetic group.

The protein resides in the cytoplasm. Its pathway is lipid metabolism; fatty acid biosynthesis. Carrier of the growing fatty acid chain in fatty acid biosynthesis. This chain is Acyl carrier protein, found in Acetivibrio thermocellus (strain ATCC 27405 / DSM 1237 / JCM 9322 / NBRC 103400 / NCIMB 10682 / NRRL B-4536 / VPI 7372) (Clostridium thermocellum).